The sequence spans 1129 residues: Eukaryotic translation initiation factor 3 subunit A (1129 aa).

The region spanning 319–502 (LQRMAAHVLL…NSIYFGTDLT (184 aa)) is the PCI domain. 2 disordered regions span residues 590–633 (NNAR…NEIQ) and 836–1129 (AAEA…VKRR). Composition is skewed to basic and acidic residues over residues 836-903 (AAEA…RSER), 923-964 (DRND…KDTD), 971-985 (WRVRREPVEPQRERG), 994-1044 (GRDD…DQPQ), and 1053-1076 (DSPRQNDRDNRDNRRPAGDRRDIR). Residues 1080 to 1091 (PKEGGGGGGGGN) are compositionally biased toward gly residues. A compositionally biased stretch (basic and acidic residues) spans 1098 to 1119 (PRDEKPPVKRDQPQDKENKAGD).

This sequence belongs to the eIF-3 subunit A family. As to quaternary structure, component of the eukaryotic translation initiation factor 3 (eIF-3) complex. The eIF-3 complex interacts with pix.

It localises to the cytoplasm. Functionally, RNA-binding component of the eukaryotic translation initiation factor 3 (eIF-3) complex, which is involved in protein synthesis of a specialized repertoire of mRNAs and, together with other initiation factors, stimulates binding of mRNA and methionyl-tRNAi to the 40S ribosome. The eIF-3 complex specifically targets and initiates translation of a subset of mRNAs involved in cell proliferation. This chain is Eukaryotic translation initiation factor 3 subunit A, found in Drosophila mojavensis (Fruit fly).